A 474-amino-acid polypeptide reads, in one-letter code: 4-aminobutyrate aminotransferase (474 aa).

Positions 1–13 are enriched in polar residues; it reads MSSTATVTESTHF. The disordered stretch occupies residues 1–31; the sequence is MSSTATVTESTHFFPNEPQGPSIKTETIPGP. Residue 142-143 participates in pyridoxal 5'-phosphate binding; it reads GS. Position 199 (Arg-199) interacts with substrate. Lys-333 carries the N6-(pyridoxal phosphate)lysine modification. Residue Thr-357 participates in pyridoxal 5'-phosphate binding.

It belongs to the class-III pyridoxal-phosphate-dependent aminotransferase family. As to quaternary structure, homodimer. It depends on pyridoxal 5'-phosphate as a cofactor.

Its subcellular location is the cytoplasm. It catalyses the reaction 4-aminobutanoate + 2-oxoglutarate = succinate semialdehyde + L-glutamate. In terms of biological role, required for the degradation of gamma-aminobutyric acid (GABA), which is important for utilization of GABA as nitrogen source. Deaminates GABA to succinate-semialdehyde, which in turn is converted to succinate by the succinate semialdehyde dehydrogenase. Cannot transaminate beta-alanine (BAL). The polypeptide is 4-aminobutyrate aminotransferase (uga1) (Schizosaccharomyces pombe (strain 972 / ATCC 24843) (Fission yeast)).